A 257-amino-acid polypeptide reads, in one-letter code: Zinc import ATP-binding protein ZnuC (257 aa).

Positions 5 to 220 constitute an ABC transporter domain; it reads VELQSVTVTF…PSYVALFGQQ (216 aa). 37–44 is an ATP binding site; sequence GPNGAGKS. The interval 234-257 is disordered; the sequence is HEHDLAGSPVGPCQHNKQHGHDNA.

It belongs to the ABC transporter superfamily. Zinc importer (TC 3.A.1.15.5) family. As to quaternary structure, the complex is composed of two ATP-binding proteins (ZnuC), two transmembrane proteins (ZnuB) and a solute-binding protein (ZnuA).

It localises to the cell inner membrane. The catalysed reaction is Zn(2+)(out) + ATP(in) + H2O(in) = Zn(2+)(in) + ADP(in) + phosphate(in) + H(+)(in). In terms of biological role, part of the ABC transporter complex ZnuABC involved in zinc import. Responsible for energy coupling to the transport system. This Photobacterium profundum (strain SS9) protein is Zinc import ATP-binding protein ZnuC.